The chain runs to 255 residues: U2 small nuclear ribonucleoprotein A' (255 aa).

LRR repeat units follow at residues 20 to 41, 43 to 64, 65 to 86, and 89 to 110; these read RDRE…GATL, QFDA…PLLR, RLKT…LDQA, and CLTE…DPLA. The 39-residue stretch at 123-161 folds into the LRRCT domain; the sequence is NPVTNKKHYRLYVIYKVPQVRVLDFQKVKLKERQEAEKM. Lys172 carries the post-translational modification N6-acetyllysine; alternate. A Glycyl lysine isopeptide (Lys-Gly) (interchain with G-Cter in SUMO2); alternate cross-link involves residue Lys172. Residues 174–201 are disordered; it reads IARRSKTFNPGAGLPTDKKKGGPSPGDV. 2 positions are modified to phosphoserine: Ser178 and Ser197. A Glycyl lysine isopeptide (Lys-Gly) (interchain with G-Cter in SUMO2) cross-link involves residue Lys221. Positions 222–255 are disordered; the sequence is GLLQSGQIPGRERRSGPTDDGEEEMEEDTVTNGS. Residues Ser236 and Ser255 each carry the phosphoserine modification. The segment covering 240-255 has biased composition (acidic residues); it reads DDGEEEMEEDTVTNGS.

The protein belongs to the U2 small nuclear ribonucleoprotein A family. Identified in the spliceosome B complex. Identified in the spliceosome C complex. Found in a pre-mRNA splicing complex with SFRS4, SFRS5, SNRNP70, SNRPA1, SRRM1 and SRRM2. Found in a pre-mRNA exonic splicing enhancer (ESE) complex with SNRNP70, SNRPA1, SRRM1 and TRA2B. Contributes to the binding of stem loop IV of U2 snRNA with SNRPB2.

It is found in the nucleus. Its function is as follows. Involved in pre-mRNA splicing as component of the spliceosome. Associated with sn-RNP U2, where it contributes to the binding of stem loop IV of U2 snRNA. This chain is U2 small nuclear ribonucleoprotein A' (SNRPA1), found in Homo sapiens (Human).